A 136-amino-acid chain; its full sequence is ATP synthase epsilon chain (136 aa).

Belongs to the ATPase epsilon chain family. F-type ATPases have 2 components, CF(1) - the catalytic core - and CF(0) - the membrane proton channel. CF(1) has five subunits: alpha(3), beta(3), gamma(1), delta(1), epsilon(1). CF(0) has three main subunits: a, b and c.

The protein resides in the cellular thylakoid membrane. Produces ATP from ADP in the presence of a proton gradient across the membrane. The sequence is that of ATP synthase epsilon chain from Parasynechococcus marenigrum (strain WH8102).